The primary structure comprises 620 residues: 1-deoxy-D-xylulose-5-phosphate synthase (620 aa).

Residues H80 and 121-123 (GHS) each bind thiamine diphosphate. D152 serves as a coordination point for Mg(2+). Thiamine diphosphate-binding positions include 153-154 (GA), N181, Y288, and E370. Residue N181 participates in Mg(2+) binding.

It belongs to the transketolase family. DXPS subfamily. As to quaternary structure, homodimer. Requires Mg(2+) as cofactor. Thiamine diphosphate serves as cofactor.

It carries out the reaction D-glyceraldehyde 3-phosphate + pyruvate + H(+) = 1-deoxy-D-xylulose 5-phosphate + CO2. It participates in metabolic intermediate biosynthesis; 1-deoxy-D-xylulose 5-phosphate biosynthesis; 1-deoxy-D-xylulose 5-phosphate from D-glyceraldehyde 3-phosphate and pyruvate: step 1/1. In terms of biological role, catalyzes the acyloin condensation reaction between C atoms 2 and 3 of pyruvate and glyceraldehyde 3-phosphate to yield 1-deoxy-D-xylulose-5-phosphate (DXP). This Klebsiella pneumoniae (strain 342) protein is 1-deoxy-D-xylulose-5-phosphate synthase.